The sequence spans 478 residues: PTS system mannitol-specific EIICB component (478 aa).

Over methionine 1–asparagine 29 the chain is Cytoplasmic. Residues phenylalanine 18–glutamate 347 form the PTS EIIC type-2 domain. The helical transmembrane segment at isoleucine 30 to asparagine 51 threads the bilayer. At glutamate 52 to asparagine 55 the chain is on the extracellular side. Residues threonine 56–lysine 76 traverse the membrane as a helical segment. Residues methionine 77–phenylalanine 139 are Cytoplasmic-facing. The chain crosses the membrane as a helical span at residues threonine 140–leucine 161. Topologically, residues threonine 162–glycine 170 are extracellular. A helical transmembrane segment spans residues valine 171 to lysine 191. Residues valine 192–alanine 278 lie on the Cytoplasmic side of the membrane. A helical transmembrane segment spans residues alanine 279–valine 298. Residues alanine 299 to tyrosine 318 lie on the Extracellular side of the membrane. A helical transmembrane segment spans residues phenylalanine 319–leucine 340. The Cytoplasmic segment spans residues lysine 341–lysine 478. The PTS EIIB type-2 domain occupies asparagine 390 to lysine 478. Residue cysteine 396 is the Phosphocysteine intermediate; for EIIB activity of the active site. A Phosphocysteine; by EIIA modification is found at cysteine 396.

As to quaternary structure, homodimer.

Its subcellular location is the cell membrane. It catalyses the reaction D-mannitol(out) + N(pros)-phospho-L-histidyl-[protein] = D-mannitol 1-phosphate(in) + L-histidyl-[protein]. In terms of biological role, the phosphoenolpyruvate-dependent sugar phosphotransferase system (sugar PTS), a major carbohydrate active transport system, catalyzes the phosphorylation of incoming sugar substrates concomitantly with their translocation across the cell membrane. The enzyme II CmtAB PTS system is involved in D-mannitol transport. The chain is PTS system mannitol-specific EIICB component from Bacillus subtilis (strain 168).